Here is a 311-residue protein sequence, read N- to C-terminus: tRNA dimethylallyltransferase (311 aa).

ATP is bound at residue 13 to 20 (GPTASGKT). A substrate-binding site is contributed by 15 to 20 (TASGKT). Interaction with substrate tRNA stretches follow at residues 38-41 (DSMQ) and 166-170 (QRVLR).

This sequence belongs to the IPP transferase family. As to quaternary structure, monomer. The cofactor is Mg(2+).

The enzyme catalyses adenosine(37) in tRNA + dimethylallyl diphosphate = N(6)-dimethylallyladenosine(37) in tRNA + diphosphate. Catalyzes the transfer of a dimethylallyl group onto the adenine at position 37 in tRNAs that read codons beginning with uridine, leading to the formation of N6-(dimethylallyl)adenosine (i(6)A). This is tRNA dimethylallyltransferase from Staphylococcus aureus (strain MRSA252).